The primary structure comprises 835 residues: Ribonuclease R (835 aa).

One can recognise an RNB domain in the interval 267-593; the sequence is RVDLRELPLV…LLHRAIKYLI (327 aa). The S1 motif domain occupies 652–733; that stretch reads GDELEGVIAN…DDKQIDFELV (82 aa). Positions 739-754 are enriched in basic and acidic residues; that stretch reads LRGEGKTAKKRAAEAK. Residues 739–835 form a disordered region; it reads LRGEGKTAKK…KTKRTKQDAQ (97 aa). Residues 755 to 764 are compositionally biased toward basic residues; sequence RKAKEKKRAA. Residues 765–777 show a composition bias toward low complexity; the sequence is TRSSSKESATARA. Residues 783–793 show a composition bias toward basic and acidic residues; the sequence is PTKRPEQTDSG. Basic residues predominate over residues 809–829; it reads KPKVKKAHKKKPHSKPKKTKR.

The protein belongs to the RNR ribonuclease family. RNase R subfamily.

The protein resides in the cytoplasm. It carries out the reaction Exonucleolytic cleavage in the 3'- to 5'-direction to yield nucleoside 5'-phosphates.. Functionally, 3'-5' exoribonuclease that releases 5'-nucleoside monophosphates and is involved in maturation of structured RNAs. In Vibrio parahaemolyticus serotype O3:K6 (strain RIMD 2210633), this protein is Ribonuclease R.